Reading from the N-terminus, the 738-residue chain is 1,4-alpha-glucan branching enzyme GlgB (738 aa).

Catalysis depends on D399, which acts as the Nucleophile. Residue E452 is the Proton donor of the active site.

It belongs to the glycosyl hydrolase 13 family. GlgB subfamily. In terms of assembly, monomer.

It carries out the reaction Transfers a segment of a (1-&gt;4)-alpha-D-glucan chain to a primary hydroxy group in a similar glucan chain.. Its pathway is glycan biosynthesis; glycogen biosynthesis. Catalyzes the formation of the alpha-1,6-glucosidic linkages in glycogen by scission of a 1,4-alpha-linked oligosaccharide from growing alpha-1,4-glucan chains and the subsequent attachment of the oligosaccharide to the alpha-1,6 position. The sequence is that of 1,4-alpha-glucan branching enzyme GlgB from Chlamydia trachomatis serovar D (strain ATCC VR-885 / DSM 19411 / UW-3/Cx).